A 471-amino-acid polypeptide reads, in one-letter code: 3-isopropylmalate dehydratase large subunit (471 aa).

Cys-349, Cys-409, and Cys-412 together coordinate [4Fe-4S] cluster.

This sequence belongs to the aconitase/IPM isomerase family. LeuC type 1 subfamily. Heterodimer of LeuC and LeuD. It depends on [4Fe-4S] cluster as a cofactor.

The catalysed reaction is (2R,3S)-3-isopropylmalate = (2S)-2-isopropylmalate. It participates in amino-acid biosynthesis; L-leucine biosynthesis; L-leucine from 3-methyl-2-oxobutanoate: step 2/4. In terms of biological role, catalyzes the isomerization between 2-isopropylmalate and 3-isopropylmalate, via the formation of 2-isopropylmaleate. This Aliivibrio fischeri (strain MJ11) (Vibrio fischeri) protein is 3-isopropylmalate dehydratase large subunit.